Reading from the N-terminus, the 540-residue chain is Homoserine O-acetyltransferase (540 aa).

Residues 66–404 (NVILICHALT…QHGHDAFLLE (339 aa)) enclose the AB hydrolase-1 domain. The Nucleophile role is filled by S171. Substrate is bound at residue R240. Positions 262-284 (QDTDKSGIKGTTGTEGKNSSEIS) are disordered. Residues D365 and H398 contribute to the active site. D399 lines the substrate pocket. 2 consecutive CBS domains span residues 425-484 (MNRN…ELDE) and 486-540 (ITRD…GKYD).

This sequence belongs to the AB hydrolase superfamily. MetX family. In terms of assembly, homodimer.

The protein resides in the cytoplasm. The catalysed reaction is L-homoserine + acetyl-CoA = O-acetyl-L-homoserine + CoA. Its pathway is amino-acid biosynthesis; L-methionine biosynthesis via de novo pathway; O-acetyl-L-homoserine from L-homoserine: step 1/1. Its function is as follows. Transfers an acetyl group from acetyl-CoA to L-homoserine, forming acetyl-L-homoserine. In vitro, can also use propionyl-CoA or butiryl-CoA as acyl donor. The chain is Homoserine O-acetyltransferase from Methanosarcina acetivorans (strain ATCC 35395 / DSM 2834 / JCM 12185 / C2A).